The following is a 174-amino-acid chain: Histone deacetylase complex subunit SAP30 homolog (174 aa).

The segment at 22–70 (CCLLDDGERCRKQAGNASYSKRIQKTVTQRRLKLSIDSHARHIYICDFH) adopts an Atypical zinc-finger fold.

This sequence belongs to the SAP30 family. In terms of assembly, component of the class 1 Sin3-histone deacetylase complex (HDAC).

Its subcellular location is the nucleus. Functionally, required for the function of the class 1 Sin3-histone deacetylase complex (HDAC). The polypeptide is Histone deacetylase complex subunit SAP30 homolog (Anopheles gambiae (African malaria mosquito)).